We begin with the raw amino-acid sequence, 160 residues long: Protein-export protein SecB (160 aa).

It belongs to the SecB family. As to quaternary structure, homotetramer, a dimer of dimers. One homotetramer interacts with 1 SecA dimer.

The protein localises to the cytoplasm. Its function is as follows. One of the proteins required for the normal export of preproteins out of the cell cytoplasm. It is a molecular chaperone that binds to a subset of precursor proteins, maintaining them in a translocation-competent state. It also specifically binds to its receptor SecA. The protein is Protein-export protein SecB of Aliivibrio salmonicida (strain LFI1238) (Vibrio salmonicida (strain LFI1238)).